The following is a 674-amino-acid chain: ATP-dependent DNA helicase Hel308 (674 aa).

ATP-binding positions include Gln27 and 44-51 (VPTAAGKT). One can recognise a Helicase ATP-binding domain in the interval 31-197 (IEQFRKGKNI…WLNASLIKSS (167 aa)). The DEAH box signature appears at 142–145 (DEIH). In terms of domain architecture, Helicase C-terminal spans 224-411 (DINLLVKETV…PEKVRFNTLA (188 aa)).

It belongs to the helicase family. Hel308 subfamily. As to quaternary structure, monomer.

The enzyme catalyses Couples ATP hydrolysis with the unwinding of duplex DNA by translocating in the 3'-5' direction.. It carries out the reaction ATP + H2O = ADP + phosphate + H(+). Functionally, DNA-dependent ATPase and 3'-5' DNA helicase that may be involved in repair of stalled replication forks. The polypeptide is ATP-dependent DNA helicase Hel308 (Thermoplasma volcanium (strain ATCC 51530 / DSM 4299 / JCM 9571 / NBRC 15438 / GSS1)).